Consider the following 911-residue polypeptide: Disks large homolog 1 (911 aa).

The 61-residue stretch at 4 to 64 (RKQDTQRALH…FYEVTLLDNP (61 aa)) folds into the L27 domain. Residue Ser39 is modified to Phosphoserine; by CaMK2. The tract at residues 70–105 (SKQCEPVQPGNPWESGSLSSAAVTSESLPGGLSPPV) is disordered. The segment covering 83-96 (ESGSLSSAAVTSES) has biased composition (polar residues). Residues Ser122, Ser138, and Ser158 each carry the phosphoserine modification. Residues 162–212 (PTEAVPPSSPIVPVTPALPVPAESPVVLPSTPQANPPPVLVNTDSLETPTY) form an interaction with SH3 domains region. 2 PDZ domains span residues 224–310 (EITL…VKRR) and 318–404 (EIKL…AAKP). The tract at residues 224–545 (EITLERGNSG…QAVTIVAQYR (322 aa)) is required for interaction with MARCHF2. A Phosphoserine; by CaMK2 modification is found at Ser232. Position 398 is a phosphotyrosine (Tyr398). Residues 419-441 (TNSSSQSVDNHVSPSSYLGQTPA) are compositionally biased toward polar residues. The interval 419–443 (TNSSSQSVDNHVSPSSYLGQTPASP) is disordered. A PDZ 3 domain is found at 465 to 545 (KVVLHRGSTG…QAVTIVAQYR (81 aa)). 9 positions are modified to phosphoserine: Ser567, Ser572, Ser574, Ser578, Ser597, Ser618, Ser684, Ser687, and Ser841. Residues 580–650 (KRSLYVRALF…PSKRRVEKKE (71 aa)) enclose the SH3 domain. Residues 662–696 (KTRGDKGEIPDDMGSKGLKHVTSNASDSESSYHEY) are disordered. Residues 721–896 (TRPVIILGPM…IYNQVKQIIE (176 aa)) enclose the Guanylate kinase-like domain.

This sequence belongs to the MAGUK family. Homotetramer. Interacts (via guanylate kinase-like domain) with DLGAP1, DLGAP2, DLGAP3, DLGAP4 and MAP1A. Interacts (via guanylate kinase-like domain) with KIF13B. May interact with HTR2A. Interacts (via PDZ domains) with GRIA1. Interacts (via PDZ domains) with GRIN2A. Interacts (via PDZ domains) with KCND2 and KCND3. Interacts (via PDZ domains) with KCNA1, KCNA2, KCNA3 and KCNA4. Interacts (via PDZ domains) with ADGRA3. Interacts with KCNF1. Interacts with CAMK2. Interacts with cytoskeleton-associated protein EPB41. Interacts with cytoskeleton-associated protein EZR. Found in a complex with KCNA5 and CAV3. Found in a complex with APC and CTNNB1. Interacts (via PDZ domains) with APC. Interacts with CDH1 through binding to PIK3R1. Forms multiprotein complexes with CASK, LIN7A, LIN7B, LIN7C, APBA1, and KCNJ12. Interacts with TOPK. Forms a tripartite complex composed of DLG1, MPP7 and LIN7 (LIN7A or LIN7C). May interact with TJAP1. Interacts with PTEN. Interacts with FRMPD4 (via C-terminus). Interacts with LRFN1 and LRFN2. Interacts with LRFN4 and SFPQ. Interacts (via PDZ domains) with ADGRA2 (via PDZ-binding motif). Interacts with ADAM10; this interaction recruits ADAM10 to the cell membrane during long-term depression in hippocampal neurons. Interacts with DGKI (via PDZ-binding motif). Interacts (via PDZ domains) with MARCHF2 (via PDZ domain); the interaction leads to DLG1 ubiqtuitination and degradation. Interacts (via N-terminus) with MPP3; this interaction connects CADM1 with DLG1 and links CADM1 with the regulatory subunit of phosphoinositide-3-kinase (PI3K) by forming a multiprotein complex and participates in cell spreading. Post-translationally, phosphorylated by MAPK12. Phosphorylation of Ser-39 modulates transport to the plasma membrane. Phosphorylation of Ser-232 regulates association with GRIN2A. In terms of processing, ubiquitinated; by MARCHF2 which results in its degradation. As to expression, widely expressed. Strongly expressed in epithelial cells, in the small intestine it is only detected in the vili. Expressed in brain, heart (at protein level), muscle, lung and liver. In the brain it was detected in olfactory bulbs, cerebral cortex, hippocampus, and spinal cord (at protein level).

It is found in the cell membrane. It localises to the basolateral cell membrane. Its subcellular location is the endoplasmic reticulum membrane. The protein resides in the postsynaptic density. The protein localises to the synapse. It is found in the sarcolemma. It localises to the cell junction. Its subcellular location is the cytoplasm. The protein resides in the apical cell membrane. Essential multidomain scaffolding protein required for normal development. Recruits channels, receptors and signaling molecules to discrete plasma membrane domains in polarized cells. Promotes epithelial cell layer barrier function via maintaining cell-cell adhesion. May play a role in adherens junction assembly, signal transduction, cell proliferation, synaptogenesis and lymphocyte activation. Regulates the excitability of cardiac myocytes by modulating the functional expression of Kv4 channels. Functional regulator of Kv1.5 channel. During long-term depression in hippocampal neurons, it recruits ADAM10 to the plasma membrane. This is Disks large homolog 1 from Rattus norvegicus (Rat).